Here is a 375-residue protein sequence, read N- to C-terminus: Elongation factor Tu (375 aa).

Positions 10–205 (KPHINVGAIG…TMDKYFVIPE (196 aa)) constitute a tr-type G domain. The interval 19–26 (GHVDHGKT) is G1. 19 to 26 (GHVDHGKT) contacts GTP. Thr-26 serves as a coordination point for Mg(2+). The G2 stretch occupies residues 60–64 (GITIN). The tract at residues 81 to 84 (DCPG) is G3. GTP-binding positions include 81–85 (DCPGH) and 136–139 (NKMD). A G4 region spans residues 136–139 (NKMD). The interval 173-175 (SAF) is G5.

The protein belongs to the TRAFAC class translation factor GTPase superfamily. Classic translation factor GTPase family. EF-Tu/EF-1A subfamily. Monomer.

It localises to the cytoplasm. It carries out the reaction GTP + H2O = GDP + phosphate + H(+). Its function is as follows. GTP hydrolase that promotes the GTP-dependent binding of aminoacyl-tRNA to the A-site of ribosomes during protein biosynthesis. The polypeptide is Elongation factor Tu (tuf) (Spirochaeta aurantia).